A 379-amino-acid polypeptide reads, in one-letter code: Bifunctional enzyme IspD/IspF (379 aa).

Residues 1-213 (MSQVSLVVMG…QGFEPPFGGC (213 aa)) form a 2-C-methyl-D-erythritol 4-phosphate cytidylyltransferase region. A 2-C-methyl-D-erythritol 2,4-cyclodiphosphate synthase region spans residues 214-379 (YGGSGFDVHA…DWTKHACFNR (166 aa)). Positions 220 and 222 each coordinate a divalent metal cation. 4-CDP-2-C-methyl-D-erythritol 2-phosphate is bound by residues 220–222 (DVH) and 246–247 (HS). Residue H254 coordinates a divalent metal cation. 4-CDP-2-C-methyl-D-erythritol 2-phosphate contacts are provided by residues 268-270 (DIG), 273-277 (FPDSD), 344-347 (TTTE), F351, and R354.

It in the N-terminal section; belongs to the IspD/TarI cytidylyltransferase family. IspD subfamily. The protein in the C-terminal section; belongs to the IspF family. It depends on a divalent metal cation as a cofactor.

The enzyme catalyses 2-C-methyl-D-erythritol 4-phosphate + CTP + H(+) = 4-CDP-2-C-methyl-D-erythritol + diphosphate. The catalysed reaction is 4-CDP-2-C-methyl-D-erythritol 2-phosphate = 2-C-methyl-D-erythritol 2,4-cyclic diphosphate + CMP. The protein operates within isoprenoid biosynthesis; isopentenyl diphosphate biosynthesis via DXP pathway; isopentenyl diphosphate from 1-deoxy-D-xylulose 5-phosphate: step 2/6. It participates in isoprenoid biosynthesis; isopentenyl diphosphate biosynthesis via DXP pathway; isopentenyl diphosphate from 1-deoxy-D-xylulose 5-phosphate: step 4/6. Bifunctional enzyme that catalyzes the formation of 4-diphosphocytidyl-2-C-methyl-D-erythritol from CTP and 2-C-methyl-D-erythritol 4-phosphate (MEP) (IspD), and catalyzes the conversion of 4-diphosphocytidyl-2-C-methyl-D-erythritol 2-phosphate (CDP-ME2P) to 2-C-methyl-D-erythritol 2,4-cyclodiphosphate (ME-CPP) with a corresponding release of cytidine 5-monophosphate (CMP) (IspF). The protein is Bifunctional enzyme IspD/IspF of Wolinella succinogenes (strain ATCC 29543 / DSM 1740 / CCUG 13145 / JCM 31913 / LMG 7466 / NCTC 11488 / FDC 602W) (Vibrio succinogenes).